The primary structure comprises 128 residues: Adrenodoxin (128 aa).

At S3 the chain carries Phosphoserine. K6 bears the N6-acetyllysine; alternate mark. K6 bears the N6-succinyllysine; alternate mark. The 2Fe-2S ferredoxin-type domain occupies 7–111 (VTVNFINRDG…NMTVRVPDAV (105 aa)). 4 residues coordinate [2Fe-2S] cluster: C46, C52, C55, and C92. K98 is modified (N6-succinyllysine). At S117 the chain carries Phosphoserine.

Belongs to the adrenodoxin/putidaredoxin family. In terms of assembly, interacts with CYP11A1. [2Fe-2S] cluster serves as cofactor.

It is found in the mitochondrion matrix. Essential for the synthesis of various steroid hormones. Participates in the reduction of mitochondrial cytochrome P450 for steroidogenesis. Transfers electrons from adrenodoxin reductase to CYP11A1, a cytochrome P450 that catalyzes cholesterol side-chain cleavage. Does not form a ternary complex with adrenodoxin reductase and CYP11A1 but shuttles between the two enzymes to transfer electrons. The chain is Adrenodoxin (FDX1) from Ovis aries (Sheep).